A 777-amino-acid chain; its full sequence is Hepatocyte growth factor-regulated tyrosine kinase substrate (777 aa).

One can recognise a VHS domain in the interval 15–143; that stretch reads ATSQLLLETD…IMKVEGHVFP (129 aa). Residues 160–220 form an FYVE-type zinc finger; that stretch reads WVDAEECHRC…VCEPCFEQLN (61 aa). 6 residues coordinate Zn(2+): Cys166, Cys169, Cys182, Cys185, Cys190, and Cys193. Position 207 is an N6-acetyllysine (Lys207). Residues Cys212 and Cys215 each contribute to the Zn(2+) site. Positions 223–319 are disordered; that stretch reads AEGKAASTTE…SPVNSSAPLA (97 aa). An interaction with SNX1 region spans residues 225-541; that stretch reads GKAASTTELP…QRLQEQEKER (317 aa). The region spanning 258-277 is the UIM domain; sequence QEEEELQLALALSQSEAEEK. Residues 292-311 are compositionally biased toward low complexity; it reads AEPTPVASSAPPASSLYSSP. Phosphotyrosine is present on residues Tyr308, Tyr329, and Tyr334. The interval 338 to 370 is disordered; it reads KQEEARKSPTPSAPVPLTEPTAQPGEGHAIPAN. The interval 443 to 541 is interaction with SNAP25 and TRAK2; it reads SINTMHPQLL…QRLQEQEKER (99 aa). Residues 452-570 form an interaction with STAM region; that stretch reads LELLNQLDER…FSLPYAQLQA (119 aa). An interaction with NF2 region spans residues 478-777; it reads ARGALSALRE…GSEAQLISFD (300 aa). The residue at position 549 (Lys549) is an N6-succinyllysine. Low complexity predominate over residues 645–658; sequence AAAQGPAGPTTSPA. Disordered stretches follow at residues 645–698 and 712–777; these read AAAQ…YMGS and NLMP…ISFD. 2 stretches are compositionally biased toward polar residues: residues 659 to 698 and 730 to 739; these read YSSY…YMGS and PYISGQQPVY. Residues 753–777 show a composition bias toward low complexity; that stretch reads PPVAQQPPAQGPPAQGSEAQLISFD.

As to quaternary structure, component of the ESCRT-0 complex composed of STAM or STAM2 and HGS. Part of a complex at least composed of HSG, STAM2 (or probably STAM) and EPS15. Interacts with STAM. Interacts with STAM2. Interacts with EPS15; the interaction is direct, calcium-dependent and inhibited by SNAP25. Identified in a complex with STAM and LITAF. Found in a complex with STAM and E3 ligase ITCH and DTX3L. Interacts with E3 ligase DTX3L; the interaction brings together STAM and HSG, promotes their recruitment to early endosomes and decreases STAM and HGS ubiquitination by ITCH. Interacts with NF2; the interaction is direct. Interacts with ubiquitin; the interaction is direct. Interacts with VPS37C. Interacts with SMAD1, SMAD2 and SMAD3. Interacts with TSG101; the interaction mediates the association with the ESCRT-I complex. Interacts with SNAP25; the interaction is direct and decreases with addition of increasing concentrations of free calcium. Interacts with SNX1; the interaction is direct. Component of a 550 kDa membrane complex at least composed of HGS and SNX1 but excluding EGFR. Interacts with TRAK1. Interacts with TRAK2. Component of the CART complex, at least composed of ACTN4, HGS/HRS, MYO5B and TRIM3. Interacts (via UIM domain) with UBQLN1 (via ubiquitin-like domain). Interacts with ARRDC3. Identified in a complex containing at least ARRDC4, AVPR2 and HGS. Interacts with LAPTM4B; promotes HGS ubiquitination. Post-translationally, phosphorylated on Tyr-334. A minor site of phosphorylation on Tyr-329 is detected. Phosphorylation occurs in response to EGF, IL-2, GM-CSF and HGF. Ubiquitinated by ITCH.

It is found in the cytoplasm. It localises to the early endosome membrane. The protein resides in the endosome. The protein localises to the multivesicular body membrane. In terms of biological role, involved in intracellular signal transduction mediated by cytokines and growth factors. When associated with STAM it suppresses DNA signaling upon stimulation by IL-2 and GM-CSF. Could be a direct effector of PI3-kinase in vesicular pathway via early endosomes and may regulate trafficking to early and late endosomes by recruiting clathrin. May concentrate ubiquitinated receptors within clathrin-coated regions. Involved in down-regulation of receptor tyrosine kinase via multivesicular body (MVBs) when complexed with STAM (ESCRT-0 complex). The ESCRT-0 complex binds ubiquitin and acts as a sorting machinery that recognizes ubiquitinated receptors and transfers them to further sequential lysosomal sorting/trafficking processes. May contribute to the efficient recruitment of SMADs to the activin receptor complex. Involved in receptor recycling via its association with the CART complex, a multiprotein complex required for efficient transferrin receptor recycling but not for EGFR degradation. The sequence is that of Hepatocyte growth factor-regulated tyrosine kinase substrate (HGS) from Bos taurus (Bovine).